A 150-amino-acid polypeptide reads, in one-letter code: S-protein homolog 28 (150 aa).

A glycan (N-linked (GlcNAc...) asparagine) is linked at asparagine 122.

Belongs to the plant self-incompatibility (S1) protein family.

The protein localises to the secreted. This is S-protein homolog 28 from Arabidopsis thaliana (Mouse-ear cress).